The following is a 415-amino-acid chain: MKFLVWGLGRSGKGALKLLKERGFEVYAGDDSQNPELWREVLGEVDTVVLSPGIPPSHPLWKEALKKEKEVVGELELAYRFFKGKVIAITGTDGKSTTTRLTYLILKKFFDEVFEAGNIGKPFSEVVLENPEGIAVLEVSSFQGKTLKTFRPNIGAFISFSVDHLDWHPSIEDYLKSKYRIFENQTEEDFLILNDLVYEIKKTPSRARKVLFSELYINSDSVFYKDIRLFNPKNLKIRGLHNVYNASVASLIALTLGLKPEDFEEVIYEFRGLPHRLEFLGNFNGVEVYNDSKSTTPHALMHALKTFPDNSVILIVGGKDKGADFYSLRHIVQKKVKIALAIGETKEKIKDSWKDITEVKTCNTLEEAVKLAREVSKLGNVVLFSPACSSFDMFRNYEERGEKFKELVEIWFTRT.

Position 91-97 (glycine 91–threonine 97) interacts with ATP.

The protein belongs to the MurCDEF family.

It is found in the cytoplasm. The enzyme catalyses UDP-N-acetyl-alpha-D-muramoyl-L-alanine + D-glutamate + ATP = UDP-N-acetyl-alpha-D-muramoyl-L-alanyl-D-glutamate + ADP + phosphate + H(+). It participates in cell wall biogenesis; peptidoglycan biosynthesis. Cell wall formation. Catalyzes the addition of glutamate to the nucleotide precursor UDP-N-acetylmuramoyl-L-alanine (UMA). The chain is UDP-N-acetylmuramoylalanine--D-glutamate ligase from Aquifex aeolicus (strain VF5).